The primary structure comprises 312 residues: Holliday junction branch migration complex subunit RuvB (312 aa).

The tract at residues Met-1–Tyr-168 is large ATPase domain (RuvB-L). Residues Arg-8, Gly-49, Lys-52, Thr-53, Thr-54, Glu-115 to Phe-117, Arg-158, Tyr-168, and Arg-206 contribute to the ATP site. Thr-53 is a binding site for Mg(2+). Residues Glu-169–Gln-234 form a small ATPAse domain (RuvB-S) region. Residues Glu-237–Lys-312 form a head domain (RuvB-H) region. Lys-290 and Arg-295 together coordinate DNA.

The protein belongs to the RuvB family. Homohexamer. Forms an RuvA(8)-RuvB(12)-Holliday junction (HJ) complex. HJ DNA is sandwiched between 2 RuvA tetramers; dsDNA enters through RuvA and exits via RuvB. An RuvB hexamer assembles on each DNA strand where it exits the tetramer. Each RuvB hexamer is contacted by two RuvA subunits (via domain III) on 2 adjacent RuvB subunits; this complex drives branch migration. In the full resolvosome a probable DNA-RuvA(4)-RuvB(12)-RuvC(2) complex forms which resolves the HJ.

The protein localises to the cytoplasm. The enzyme catalyses ATP + H2O = ADP + phosphate + H(+). Functionally, the RuvA-RuvB-RuvC complex processes Holliday junction (HJ) DNA during genetic recombination and DNA repair, while the RuvA-RuvB complex plays an important role in the rescue of blocked DNA replication forks via replication fork reversal (RFR). RuvA specifically binds to HJ cruciform DNA, conferring on it an open structure. The RuvB hexamer acts as an ATP-dependent pump, pulling dsDNA into and through the RuvAB complex. RuvB forms 2 homohexamers on either side of HJ DNA bound by 1 or 2 RuvA tetramers; 4 subunits per hexamer contact DNA at a time. Coordinated motions by a converter formed by DNA-disengaged RuvB subunits stimulates ATP hydrolysis and nucleotide exchange. Immobilization of the converter enables RuvB to convert the ATP-contained energy into a lever motion, pulling 2 nucleotides of DNA out of the RuvA tetramer per ATP hydrolyzed, thus driving DNA branch migration. The RuvB motors rotate together with the DNA substrate, which together with the progressing nucleotide cycle form the mechanistic basis for DNA recombination by continuous HJ branch migration. Branch migration allows RuvC to scan DNA until it finds its consensus sequence, where it cleaves and resolves cruciform DNA. In Ureaplasma parvum serovar 3 (strain ATCC 27815 / 27 / NCTC 11736), this protein is Holliday junction branch migration complex subunit RuvB.